The sequence spans 314 residues: Putative steroid dehydrogenase 1 (314 aa).

47–76 is an NADP(+) binding site; the sequence is ASWAVVTGATDGIGKSYSFELAKRGFNVYI. Residue tyrosine 202 is part of the active site.

Belongs to the short-chain dehydrogenases/reductases (SDR) family. 17-beta-HSD 3 subfamily.

The polypeptide is Putative steroid dehydrogenase 1 (stdh-1) (Caenorhabditis elegans).